The following is a 572-amino-acid chain: Methionine--tRNA ligase (572 aa).

Positions 11–21 (PYINGIKHLGN) match the 'HIGH' region motif. The Zn(2+) site is built by C143, C146, C156, and C159. The short motif at 346 to 350 (QFSTS) is the 'KMSKS' region element. T349 serves as a coordination point for ATP.

Belongs to the class-I aminoacyl-tRNA synthetase family. MetG type 1 subfamily. Monomer. Zn(2+) serves as cofactor.

It localises to the cytoplasm. It catalyses the reaction tRNA(Met) + L-methionine + ATP = L-methionyl-tRNA(Met) + AMP + diphosphate. Its function is as follows. Is required not only for elongation of protein synthesis but also for the initiation of all mRNA translation through initiator tRNA(fMet) aminoacylation. The sequence is that of Methionine--tRNA ligase from Dinoroseobacter shibae (strain DSM 16493 / NCIMB 14021 / DFL 12).